The chain runs to 427 residues: V-type proton ATPase subunit C 2 (427 aa).

Residues 292-319 (HKVKVTPLGNPDRPAAGQTDRERESEGE) form a disordered region.

The protein belongs to the V-ATPase C subunit family. As to quaternary structure, V-ATPase is a heteromultimeric enzyme made up of two complexes: the ATP-hydrolytic V1 complex and the proton translocation V0 complex. The V1 complex consists of three catalytic AB heterodimers that form a heterohexamer, three peripheral stalks each consisting of EG heterodimers, one central rotor including subunits D and F, and the regulatory subunits C and H. The proton translocation complex V0 consists of the proton transport subunit a, a ring of proteolipid subunits c9c'', rotary subunit d, subunits e and f, and the accessory subunits ATP6AP1/Ac45 and ATP6AP2/PRR. As to expression, kidney and placenta.

In terms of biological role, subunit of the V1 complex of vacuolar(H+)-ATPase (V-ATPase), a multisubunit enzyme composed of a peripheral complex (V1) that hydrolyzes ATP and a membrane integral complex (V0) that translocates protons. V-ATPase is responsible for acidifying and maintaining the pH of intracellular compartments and in some cell types, is targeted to the plasma membrane, where it is responsible for acidifying the extracellular environment. Subunit C is necessary for the assembly of the catalytic sector of the enzyme and is likely to have a specific function in its catalytic activity. This chain is V-type proton ATPase subunit C 2 (ATP6V1C2), found in Homo sapiens (Human).